A 229-amino-acid chain; its full sequence is MMSYAEKPEDITRDEWMEKLNNVHIQRADMNRLIMNYLVTEGFKEAAEKFRMESGIEPSVDLDSLDERIKIREMVLKGQIQEAIALINSLHPELLDTNRYLYFHLQQQHLIELIRLRETEAALEFAQTQLAEQGEESRECLTEMERTLALLAFDNPEESPFGDLLNMMQRQKVWSEVNQAVLDYENRESTPKLAKLLKLLLWAQNELDQKKVKYPKMTDLSKGTIEDPK.

The region spanning 26–58 (QRADMNRLIMNYLVTEGFKEAAEKFRMESGIEP) is the LisH domain. The 58-residue stretch at 64–121 (SLDERIKIREMVLKGQIQEAIALINSLHPELLDTNRYLYFHLQQQHLIELIRLRETEA) folds into the CTLH domain.

Identified in the CTLH complex that contains at least MAEA, RMND5A (or alternatively its paralog RMND5B), GID8, WDR26, and RANBP9 and/or RANBP10. Interacts with CTNNB1.

It localises to the cytoplasm. It is found in the nucleus. Core component of the CTLH E3 ubiquitin-protein ligase complex that selectively accepts ubiquitin from UBE2H and mediates ubiquitination and subsequent proteasomal degradation of target proteins. Acts as a positive regulator of Wnt signaling pathway by promoting beta-catenin (CTNNB1) nuclear accumulation. Required for normal Wnt signaling and normal dorsoventral patterning during embryogenesis. The protein is Glucose-induced degradation protein 8-B homolog (gid8b) of Danio rerio (Zebrafish).